A 72-amino-acid polypeptide reads, in one-letter code: Prokaryotic ubiquitin-like protein Pup (72 aa).

Over residues Met1 to Gln10 the composition is skewed to gly residues. Positions Met1–Asp45 are disordered. Residues Gln10–Glu60 adopt a coiled-coil conformation. Positions Gln28–Phe66 are ARC ATPase binding. The segment covering Leu33–Asp42 has biased composition (basic and acidic residues). A Deamidated glutamine modification is found at Gln72. An Isoglutamyl lysine isopeptide (Gln-Lys) (interchain with K-? in acceptor proteins) cross-link involves residue Gln72.

The protein belongs to the prokaryotic ubiquitin-like protein family. As to quaternary structure, strongly interacts with the proteasome-associated ATPase ARC through a hydrophobic interface; the interacting region of Pup lies in its C-terminal half. There is one Pup binding site per ARC hexamer ring. In terms of processing, is modified by deamidation of its C-terminal glutamine to glutamate by the deamidase Dop, a prerequisite to the subsequent pupylation process.

It participates in protein degradation; proteasomal Pup-dependent pathway. Protein modifier that is covalently attached to lysine residues of substrate proteins, thereby targeting them for proteasomal degradation. The tagging system is termed pupylation. The protein is Prokaryotic ubiquitin-like protein Pup of Streptomyces griseus subsp. griseus (strain JCM 4626 / CBS 651.72 / NBRC 13350 / KCC S-0626 / ISP 5235).